Consider the following 525-residue polypeptide: GMP synthase [glutamine-hydrolyzing] (525 aa).

Residues 9–207 (RVLILDFGSQ…VLEIAGCEPL (199 aa)) form the Glutamine amidotransferase type-1 domain. The active-site Nucleophile is the C86. Active-site residues include H181 and E183. In terms of domain architecture, GMPS ATP-PPase spans 208-400 (WTPANIVEDA…LGLPYDMVYR (193 aa)). An ATP-binding site is contributed by 235-241 (SGGVDSS).

In terms of assembly, homodimer.

It carries out the reaction XMP + L-glutamine + ATP + H2O = GMP + L-glutamate + AMP + diphosphate + 2 H(+). It participates in purine metabolism; GMP biosynthesis; GMP from XMP (L-Gln route): step 1/1. Catalyzes the synthesis of GMP from XMP. The protein is GMP synthase [glutamine-hydrolyzing] of Teredinibacter turnerae (strain ATCC 39867 / T7901).